A 486-amino-acid chain; its full sequence is Adenylate kinase 8 (486 aa).

Adenylate kinase regions lie at residues 58–258 and 269–471; these read PRII…NFIC and PRIL…SRLV. 67–72 contributes to the ATP binding site; sequence ASGKKT. The segment at 87–112 is NMP 1; sequence TFCDILKDDSDLTRAAQSYYDKKQNV. AMP is bound by residues 139-142 and Arg-202; that span reads AIPK. Residues 176-205 are LID 1; it reads GKRIDPVTGDVYHVTFMWPESEEVAQRLET. Position 278–283 (278–283) interacts with ATP; that stretch reads GAGRNL. Residues 298-327 form an NMP 2 region; it reads CCGELLKAVSADESHMGELIKPYLESEQQV. AMP contacts are provided by residues 325–327 and 354–357; these read QQV and GFPR. The interval 391–424 is LID 2; that stretch reads LRAVDPVTGEWYHSVYKPPPGPEVQARLRFNPQH. Arg-392 contributes to the ATP binding site. Residue Arg-432 coordinates AMP.

Belongs to the adenylate kinase family.

Its subcellular location is the cytoplasm. It localises to the cytosol. The enzyme catalyses AMP + ATP = 2 ADP. It catalyses the reaction a 2'-deoxyribonucleoside 5'-diphosphate + ATP = a 2'-deoxyribonucleoside 5'-triphosphate + ADP. The catalysed reaction is a ribonucleoside 5'-diphosphate + ATP = a ribonucleoside 5'-triphosphate + ADP. Functionally, nucleoside monophosphate (NMP) kinase that catalyzes the reversible transfer of the terminal phosphate group between nucleoside triphosphates and monophosphates. Has highest activity toward AMP, and weaker activity toward dAMP, CMP and dCMP. Also displays broad nucleoside diphosphate kinase activity. The sequence is that of Adenylate kinase 8 (ak8) from Danio rerio (Zebrafish).